The primary structure comprises 279 residues: uncharacterized protein (279 aa).

The Reverse transcriptase domain maps to M1–I87.

This is an uncharacterized protein from Caenorhabditis elegans.